Consider the following 517-residue polypeptide: 2-isopropylmalate synthase (517 aa).

Positions 7–269 constitute a Pyruvate carboxyltransferase domain; it reads VIIFDTTLRD…ETGIDTTQIV (263 aa). The Mn(2+) site is built by D16, H204, H206, and N240. The segment at 366–517 is required for the condensation reaction. Not required to bind substrate; sequence LADKKREIFD…KPKAQGSGTI (152 aa). Residues 395–517 form a regulatory domain region; sequence KFISQKISTE…KPKAQGSGTI (123 aa).

This sequence belongs to the alpha-IPM synthase/homocitrate synthase family. LeuA type 1 subfamily. In terms of assembly, homodimer. Remains a homodimer in the presence of L-leucine. Mn(2+) serves as cofactor.

It is found in the cytoplasm. It carries out the reaction 3-methyl-2-oxobutanoate + acetyl-CoA + H2O = (2S)-2-isopropylmalate + CoA + H(+). It participates in amino-acid biosynthesis; L-leucine biosynthesis; L-leucine from 3-methyl-2-oxobutanoate: step 1/4. Inhibited by 3-bromo substituents and Leu, the pathway end product. Its function is as follows. Catalyzes the condensation of the acetyl group of acetyl-CoA with 3-methyl-2-oxobutanoate (2-ketoisovalerate) to form 3-carboxy-3-hydroxy-4-methylpentanoate (2-isopropylmalate). Complements an E.coli deletion. This chain is 2-isopropylmalate synthase, found in Neisseria meningitidis serogroup B (strain ATCC BAA-335 / MC58).